The sequence spans 242 residues: 1-(5-phosphoribosyl)-5-[(5-phosphoribosylamino)methylideneamino] imidazole-4-carboxamide isomerase (242 aa).

The active-site Proton acceptor is the aspartate 8. The active-site Proton donor is aspartate 130.

It belongs to the HisA/HisF family.

It is found in the cytoplasm. It carries out the reaction 1-(5-phospho-beta-D-ribosyl)-5-[(5-phospho-beta-D-ribosylamino)methylideneamino]imidazole-4-carboxamide = 5-[(5-phospho-1-deoxy-D-ribulos-1-ylimino)methylamino]-1-(5-phospho-beta-D-ribosyl)imidazole-4-carboxamide. It functions in the pathway amino-acid biosynthesis; L-histidine biosynthesis; L-histidine from 5-phospho-alpha-D-ribose 1-diphosphate: step 4/9. This chain is 1-(5-phosphoribosyl)-5-[(5-phosphoribosylamino)methylideneamino] imidazole-4-carboxamide isomerase, found in Thioalkalivibrio sulfidiphilus (strain HL-EbGR7).